A 303-amino-acid polypeptide reads, in one-letter code: Methionyl-tRNA formyltransferase (303 aa).

(6S)-5,6,7,8-tetrahydrofolate is bound at residue 108–111; the sequence is SDLP.

Belongs to the Fmt family.

It carries out the reaction L-methionyl-tRNA(fMet) + (6R)-10-formyltetrahydrofolate = N-formyl-L-methionyl-tRNA(fMet) + (6S)-5,6,7,8-tetrahydrofolate + H(+). Attaches a formyl group to the free amino group of methionyl-tRNA(fMet). The formyl group appears to play a dual role in the initiator identity of N-formylmethionyl-tRNA by promoting its recognition by IF2 and preventing the misappropriation of this tRNA by the elongation apparatus. This Rickettsia typhi (strain ATCC VR-144 / Wilmington) protein is Methionyl-tRNA formyltransferase.